Here is a 196-residue protein sequence, read N- to C-terminus: Ribosome maturation factor RimP (196 aa).

Residues 164-196 form a disordered region; sequence LAPQKPNKPGPKKPGHDKKKPSNEPAAGKPRAE. A compositionally biased stretch (basic residues) spans 173–182; it reads GPKKPGHDKK.

The protein belongs to the RimP family.

It is found in the cytoplasm. Its function is as follows. Required for maturation of 30S ribosomal subunits. The protein is Ribosome maturation factor RimP of Xanthomonas campestris pv. campestris (strain 8004).